Consider the following 967-residue polypeptide: Dolichyl-phosphooligosaccharide-protein glycotransferase 1 (967 aa).

The Cytoplasmic segment spans residues 1–21 (MVKTQIKEKKKDEKVTIPLPG). Residues 22–42 (KIKTVLAFLVVLAFAAYGFYI) form a helical membrane-spanning segment. Residues 43-112 (RHLTAGKYFS…ISIFGYNELE (70 aa)) lie on the Extracellular side of the membrane. The DXD motif 1 signature appears at 53 to 55 (DPD). Asp55 provides a ligand contact to Mn(2+). Residues 113 to 133 (AFLLWPPFVGFLSVIGVYLLG) form a helical membrane-spanning segment. Over 134–135 (RK) the chain is Cytoplasmic. The chain crosses the membrane as a helical span at residues 136 to 156 (VLNEWAGMWGAIILSVLTANF). The Extracellular segment spans residues 157–165 (SRTFSGNAR). Positions 165 and 167 each coordinate Mn(2+). The short motif at 165–167 (RGD) is the DXD motif 2 element. Residues 166 to 186 (GDGPFMMLFTFSAVLMLYYLT) traverse the membrane as a helical segment. At 187 to 193 (EENKNKK) the chain is on the cytoplasmic side. A helical membrane pass occupies residues 194–214 (IIWGTLFVLLAGISTAAWNGS). Pro215 is a topological domain (extracellular). A helical transmembrane segment spans residues 216–236 (FGLMVLLGFASFQTIILFIFG). Topologically, residues 237-247 (KINELREFIKE) are cytoplasmic. A helical transmembrane segment spans residues 248 to 268 (YYPAYLGILAISYLLTIPGIG). Position 269 (Lys269) is a topological domain, extracellular. Residues 270 to 290 (IGGFVRFAFEVFLGLVFLAIV) form a helical membrane-spanning segment. Residues 291-306 (MLYGGKYLNYSDKKHR) are Cytoplasmic-facing. The chain crosses the membrane as a helical span at residues 307–327 (FAVVAVIVIAGFAGAYIYVGP). Residues 328–360 (KLFTLMGGAYQSTQVYETVQELAKTDWGDVKVY) are Extracellular-facing. The TIXE motif signature appears at 345–348 (TVQE). Residues 361–381 (YGVEKPNGIVFFLGLVGAMIV) traverse the membrane as a helical segment. The Cytoplasmic portion of the chain corresponds to 382–396 (TARYLYKLFKDGRRP). The helical transmembrane segment at 397–417 (HEELFAITFYVMSIYLLWTAA) threads the bilayer. Position 418 (Arg418) is a topological domain, extracellular. Residue Arg418 coordinates a glycophospholipid. A helical membrane pass occupies residues 419–439 (FLFLASYAIALMSGVFAGYVL). The Cytoplasmic segment spans residues 440–453 (ETVEKMKESIPIKA). Residues 454–474 (ALGGVIAIMLLLIPLTHGPLL) traverse the membrane as a helical segment. Residues 475–967 (AQSAKSMRTT…LEVSASAPHH (493 aa)) are Extracellular-facing. The tract at residues 511–513 (WWD) is interacts with target acceptor peptide in protein substrate. Positions 511 to 515 (WWDYG) match the WWDYG motif motif. Tyr516 contacts a glycophospholipid. Positions 571 to 578 (DWAKFNAI) match the DK motif motif.

It belongs to the STT3 family. Mn(2+) is required as a cofactor. It depends on Mg(2+) as a cofactor.

The protein resides in the cell membrane. It carries out the reaction an archaeal dolichyl phosphooligosaccharide + [protein]-L-asparagine = an archaeal dolichyl phosphate + a glycoprotein with the oligosaccharide chain attached by N-beta-D-glycosyl linkage to a protein L-asparagine.. It participates in protein modification; protein glycosylation. In terms of biological role, oligosaccharyl transferase (OST) that catalyzes the initial transfer of a defined glycan (ManNAcXyl(2)GlcAMan(2)GalNAc in P.furiosus) from the lipid carrier dolichol-monophosphate to an asparagine residue within an Asn-X-Ser/Thr consensus motif in nascent polypeptide chains, the first step in protein N-glycosylation. The sequence is that of Dolichyl-phosphooligosaccharide-protein glycotransferase 1 (aglB1) from Pyrococcus furiosus (strain ATCC 43587 / DSM 3638 / JCM 8422 / Vc1).